Reading from the N-terminus, the 233-residue chain is uncharacterized protein (233 aa).

This is an uncharacterized protein from Methanocaldococcus jannaschii (strain ATCC 43067 / DSM 2661 / JAL-1 / JCM 10045 / NBRC 100440) (Methanococcus jannaschii).